We begin with the raw amino-acid sequence, 644 residues long: 1-deoxy-D-xylulose-5-phosphate synthase (644 aa).

Thiamine diphosphate contacts are provided by residues histidine 84 and 125–127 (GHS). Aspartate 156 serves as a coordination point for Mg(2+). Residues 157 to 158 (GA), asparagine 185, tyrosine 296, and glutamate 378 contribute to the thiamine diphosphate site. Mg(2+) is bound at residue asparagine 185.

This sequence belongs to the transketolase family. DXPS subfamily. Homodimer. It depends on Mg(2+) as a cofactor. Thiamine diphosphate serves as cofactor.

The enzyme catalyses D-glyceraldehyde 3-phosphate + pyruvate + H(+) = 1-deoxy-D-xylulose 5-phosphate + CO2. Its pathway is metabolic intermediate biosynthesis; 1-deoxy-D-xylulose 5-phosphate biosynthesis; 1-deoxy-D-xylulose 5-phosphate from D-glyceraldehyde 3-phosphate and pyruvate: step 1/1. Functionally, catalyzes the acyloin condensation reaction between C atoms 2 and 3 of pyruvate and glyceraldehyde 3-phosphate to yield 1-deoxy-D-xylulose-5-phosphate (DXP). This Paramagnetospirillum magneticum (strain ATCC 700264 / AMB-1) (Magnetospirillum magneticum) protein is 1-deoxy-D-xylulose-5-phosphate synthase.